Here is a 494-residue protein sequence, read N- to C-terminus: Tripartite motif-containing protein 5 (494 aa).

N-acetylalanine is present on alanine 2. Residues 15 to 59 (CPICLELLTQPLSLDCGHSFCQACLTANHKTSMPDEGERSCPVCR) form an RING-type zinc finger. Serine 86 is modified (phosphoserine). A B box-type zinc finger spans residues 91-133 (QKVDHCARHGEKLLLFCQEDRKVICWLCERSQEHRGHHTFLTE). 4 residues coordinate Zn(2+): cysteine 96, histidine 99, cysteine 118, and histidine 124. A coiled-coil region spans residues 132–241 (TEEVAQEYQV…LISDLEHRLQ (110 aa)). Residues 186 to 199 (FEQLRHILDWVESN) form a required for interaction with GABARAP and for autophagy region. A B30.2/SPRY domain is found at 282–494 (LKVMLEVLRE…VPMTLCSPSS (213 aa)).

This sequence belongs to the TRIM/RBCC family. In terms of assembly, can form homodimers and homotrimers. In addition to lower-order dimerization, also exhibits a higher-order multimerization and both low- and high-order multimerizations are essential for its restriction activity. Interacts with BTBD1 and BTBD2. Interacts with PSMC4, PSMC5, PSMD7 and HSPA8/HSC70. Interacts (via B30.2/SPRY domain) with HSPA1A/B. Interacts with PSMC2, MAP3K7/TAK1, TAB2 and TAB3. Interacts with SQSTM1. Interacts with TRIM6 and TRIM34. Interacts with ULK1 (phosphorylated form), GABARAP, GABARAPL1, GABARAPL2, MAP1LC3A, MAP1LC3C and BECN1. Post-translationally, degraded in a proteasome-independent fashion in the absence of viral infection but in a proteasome-dependent fashion following exposure to restriction sensitive virus. In terms of processing, autoubiquitinated in a RING finger- and UBE2D2-dependent manner. Monoubiquitinated by TRIM21. Deubiquitinated by Yersinia YopJ. Ubiquitination may not lead to proteasomal degradation.

It localises to the cytoplasm. The protein localises to the nucleus. It catalyses the reaction S-ubiquitinyl-[E2 ubiquitin-conjugating enzyme]-L-cysteine + [acceptor protein]-L-lysine = [E2 ubiquitin-conjugating enzyme]-L-cysteine + N(6)-ubiquitinyl-[acceptor protein]-L-lysine.. Its pathway is protein modification; protein ubiquitination. Its function is as follows. Capsid-specific restriction factor that prevents infection from non-host-adapted retroviruses. Blocks viral replication early in the life cycle, after viral entry but before reverse transcription. In addition to acting as a capsid-specific restriction factor, also acts as a pattern recognition receptor that activates innate immune signaling in response to the retroviral capsid lattice. Binding to the viral capsid triggers its E3 ubiquitin ligase activity, and in concert with the heterodimeric ubiquitin conjugating enzyme complex UBE2V1-UBE2N (also known as UBC13-UEV1A complex) generates 'Lys-63'-linked polyubiquitin chains, which in turn are catalysts in the autophosphorylation of the MAP3K7/TAK1 complex (includes TAK1, TAB2, and TAB3). Activation of the MAP3K7/TAK1 complex by autophosphorylation results in the induction and expression of NF-kappa-B and MAPK-responsive inflammatory genes, thereby leading to an innate immune response in the infected cell. Plays a role in regulating autophagy through activation of autophagy regulator BECN1 by causing its dissociation from its inhibitors BCL2 and TAB2. The sequence is that of Tripartite motif-containing protein 5 (TRIM5) from Symphalangus syndactylus (Siamang).